The primary structure comprises 2559 residues: Nonribosomal peptide synthetase asqK (2559 aa).

Residues 90–474 (YRPSHTAIHA…SRKDSQVKIR (385 aa)) form an adenylation 1 region. Residues 593–669 (TNIEQLVHEL…SLVHYPAGLE (77 aa)) form the Carrier 1 domain. Position 627 is an O-(pantetheine 4'-phosphoryl)serine (S627). The tract at residues 695 to 989 (TVEQSFSQAR…GNVQCIRTKV (295 aa)) is condensation 1. Residues 1155–1562 (FDEQVRAQTD…GRMDQQVKVR (408 aa)) form an adenylation 2 region. The methyltransferase stretch occupies residues 1681–1776 (LEIGTGSGMI…NTIKDLVRQG (96 aa)). In terms of domain architecture, Carrier 2 spans 2090 to 2164 (AFTSEIERAV…GLAQHLQGLG (75 aa)). Position 2124 is an O-(pantetheine 4'-phosphoryl)serine (S2124). Positions 2261-2409 (FDGVSLSAIL…VNRCLLRVKV (149 aa)) are condensation 2.

This sequence belongs to the NRP synthetase family.

The catalysed reaction is O-methyl-L-tyrosine + anthranilate + S-adenosyl-L-methionine + 2 ATP = (-)-4'-methoxycyclopeptine + 2 AMP + S-adenosyl-L-homocysteine + 2 diphosphate + 2 H(+). The enzyme catalyses anthranilate + L-phenylalanine + S-adenosyl-L-methionine + 2 ATP = cyclopeptine + 2 AMP + S-adenosyl-L-homocysteine + 2 diphosphate + 2 H(+). It participates in secondary metabolite biosynthesis. Its pathway is alkaloid biosynthesis. The protein operates within mycotoxin biosynthesis. Its function is as follows. Nonribosomal peptide synthetase; part of the gene cluster that mediates the biosynthesis of the aspoquinolone mycotoxins. The first stage is catalyzed by the nonribosomal peptide synthetase asqK that condenses anthranilic acid and O-methyl-L-tyrosine to produce 4'-methoxycyclopeptin. AsqK is also able to use anthranilic acid and L-phenylalanine as substrates to produce cyclopeptin, but at a tenfold lower rate. Within the pathway, 4'-methoxycyclopeptin is then converted to 4'-methoxydehydrocyclopeptin by the ketoglutarate-dependent dioxygenase asqJ. AsqJ also converts its first product 4'-methoxydehydrocyclopeptin to 4'-methoxycyclopenin. The following conversion of 4'-methoxycyclopenin into 4'-methoxyviridicatin is catalyzed by the cyclopenase asqI. 4'-methoxyviridicatin is the precursor of quinolone natural products, and is further converted to quinolinone B. The prenyltransferase asqH1 then catalyzes the canonical Friedel-Crafts alkylation of quinolinone B with dimethylallyl cation to yield dimethylallyl quinolone, which is subjected to FAD-dependent dehydrogenation by the FAD-linked oxidoreductase asqF to yield conjugated aryl diene. The delta(3') double bond then serves as the site of the second alkylation with DMAPP catalyzed by the prenyltransferase asqH2 to yield a carbenium ion intermediate, which can be attacked by H(2)O to yield a styrenyl quinolone containing a C3'-hydroxyprenyl chain. The FAD-dependent monooxygenase asqG performs epoxidation of the terminal C7'-C8' olefin. Finally, after dehydratation of the epoxide at C3 by asqC, the quinolone epoxide rearrangement protein asqO catalyzes an enzymatic 3-exo-tet cyclization to yield the cyclopropyl-THF ring system in aspoquinolone. This is Nonribosomal peptide synthetase asqK from Emericella nidulans (strain FGSC A4 / ATCC 38163 / CBS 112.46 / NRRL 194 / M139) (Aspergillus nidulans).